The sequence spans 90 residues: Acylphosphatase (90 aa).

An Acylphosphatase-like domain is found at 4-90 (TVHLRITGHV…KGQYKDFRIY (87 aa)). Active-site residues include R19 and N37.

It belongs to the acylphosphatase family.

It catalyses the reaction an acyl phosphate + H2O = a carboxylate + phosphate + H(+). The sequence is that of Acylphosphatase (acyP) from Caldanaerobacter subterraneus subsp. tengcongensis (strain DSM 15242 / JCM 11007 / NBRC 100824 / MB4) (Thermoanaerobacter tengcongensis).